The primary structure comprises 435 residues: Cell adhesion molecule 2 (435 aa).

The first 24 residues, 1–24 (MIWKRSAVLRFYSVCGLLLQGSQG), serve as a signal peptide directing secretion. Residues 25 to 367 (QFPLTQNVTV…SLAGQNGPDH (343 aa)) are Extracellular-facing. One can recognise an Ig-like V-type domain in the interval 27-119 (PLTQNVTVVE…PVKTSKAYLT (93 aa)). Residues Asn31 and Asn51 are each glycosylated (N-linked (GlcNAc...) asparagine). 3 cysteine pairs are disulfide-bonded: Cys44/Cys104, Cys146/Cys203, and Cys248/Cys296. Ig-like C2-type domains are found at residues 127–219 (PQIS…VAMQ) and 227–312 (PSVK…YVLI). Asn291 is a glycosylation site (N-linked (GlcNAc...) asparagine). Residues 337-351 (SVTITTSPSTSASSS) show a composition bias toward low complexity. The segment at 337–360 (SVTITTSPSTSASSSSRRDPNSLA) is disordered. Residues 368 to 388 (ALIGGIVAVVVFVTLCSIFLL) traverse the membrane as a helical segment. Topologically, residues 389 to 435 (GRYLARHKGTYLTNEAKGAEDAPDADTAIINAEGSQVNAEEKKEYFI) are cytoplasmic. At Ser423 the chain carries Phosphoserine.

The protein belongs to the nectin family. Post-translationally, glycosylation at Asn-51 reduces adhesive binding.

Its subcellular location is the cell membrane. It is found in the synapse. The protein localises to the cell projection. The protein resides in the axon. Its function is as follows. Adhesion molecule that engages in homo- and heterophilic interactions with the other nectin-like family members, leading to cell aggregation. Important for synapse organization, providing regulated trans-synaptic adhesion. Preferentially binds to oligodendrocytes. The chain is Cell adhesion molecule 2 (Cadm2) from Mus musculus (Mouse).